A 355-amino-acid polypeptide reads, in one-letter code: UDP-3-O-acylglucosamine N-acyltransferase (355 aa).

The Proton acceptor role is filled by His-258.

The protein belongs to the transferase hexapeptide repeat family. LpxD subfamily. In terms of assembly, homotrimer.

It catalyses the reaction a UDP-3-O-[(3R)-3-hydroxyacyl]-alpha-D-glucosamine + a (3R)-hydroxyacyl-[ACP] = a UDP-2-N,3-O-bis[(3R)-3-hydroxyacyl]-alpha-D-glucosamine + holo-[ACP] + H(+). Its pathway is bacterial outer membrane biogenesis; LPS lipid A biosynthesis. Its function is as follows. Catalyzes the N-acylation of UDP-3-O-acylglucosamine using 3-hydroxyacyl-ACP as the acyl donor. Is involved in the biosynthesis of lipid A, a phosphorylated glycolipid that anchors the lipopolysaccharide to the outer membrane of the cell. The protein is UDP-3-O-acylglucosamine N-acyltransferase of Bradyrhizobium diazoefficiens (strain JCM 10833 / BCRC 13528 / IAM 13628 / NBRC 14792 / USDA 110).